Reading from the N-terminus, the 261-residue chain is Oligodendrocyte transcription factor 1 (261 aa).

Residues 41–105 (PPISSSSSTS…LRRKINSRER (65 aa)) are disordered. A compositionally biased stretch (low complexity) spans 44 to 56 (SSSSSTSSSSTAS). The bHLH domain occupies 95–154 (QLRRKINSRERKRMQDLNLAMDALREVILPYSAAHCQGAPGRKLSKIATLLLARNYILLL).

Expressed specifically in the brain, including the corpus callosum, hippocampal and cerebral white matter. Also detected in cells scattered in gray matter, most probably in oligodendrocytes.

The protein resides in the nucleus. Promotes formation and maturation of oligodendrocytes, especially within the brain. Cooperates with OLIG2 to establish the pMN domain of the embryonic neural tube. This chain is Oligodendrocyte transcription factor 1 (Olig1), found in Rattus norvegicus (Rat).